The sequence spans 710 residues: Solute carrier organic anion transporter family member 3A1 (710 aa).

N-acetylmethionine is present on methionine 1. Residues 1 to 25 (MQAKKPGGSSGGGRSGELQGDEAQR) are disordered. At 1–40 (MQAKKPGGSSGGGRSGELQGDEAQRNKKKKKKVSCFSNIK) the chain is on the cytoplasmic side. The helical transmembrane segment at 41 to 60 (IFLVSECALMLAQGTVGAYL) threads the bilayer. At 61–79 (VSVLTTLERRFNLQSADVG) the chain is on the extracellular side. A helical membrane pass occupies residues 80 to 100 (VIASSFEIGNLALILFVSYFG). The Cytoplasmic segment spans residues 101 to 106 (ARGHRP). Residues 107-131 (RLIGCGGIVMALGALLSALPEFLTH) traverse the membrane as a helical segment. Residues 132-174 (QYKYEAGEIRWGAEGRDVCAANGSGGDQGPDPDLICRSRTATN) lie on the Extracellular side of the membrane. Asparagine 153 carries an N-linked (GlcNAc...) asparagine glycan. Residues 175-203 (MMYLLLIGAQVLLGIGATPVQPLGVSYID) form a helical membrane-spanning segment. Topologically, residues 204 to 222 (DHVRRKDSSLYIGILFTML) are cytoplasmic. Residues 223–243 (VFGPACGFILGSFCTKIYVDA) form a helical membrane-spanning segment. At 244-261 (VFIDTSNLDITPDDPRWI) the chain is on the extracellular side. A helical membrane pass occupies residues 262 to 286 (GAWWGGFLLCGALLFFSSVLMFGFP). Over 287–344 (QSLPPHSDPALESEQAMLPEREYERPKPSNGVLRHPLEPDSSASCFQQLRVIPKVTKH) the chain is Cytoplasmic. A helical membrane pass occupies residues 345–366 (LLSNPVFTCIILAACMEIAVVA). Topologically, residues 367–386 (GFAAFLGKYLEQQFNLTTSS) are extracellular. Asparagine 381 is a glycosylation site (N-linked (GlcNAc...) asparagine). The chain crosses the membrane as a helical span at residues 387–410 (ANQLLGMTAIPCACLGIFLGGLLV). Residues 411-414 (KKLS) lie on the Cytoplasmic side of the membrane. A helical membrane pass occupies residues 415–438 (LSALGAIRMAMLVNLVSTACYVSF). The Extracellular segment spans residues 439–539 (LFLGCDTGPV…PGCQEAFLTF (101 aa)). N-linked (GlcNAc...) asparagine glycosylation is present at asparagine 457. Residues 465–513 (LDPYSSCNKNCECQTDSFTPVCGADGITYLSACFAGCNSTNLTGCACLM) enclose the Kazal-like domain. 3 disulfides stabilise this stretch: cysteine 471–cysteine 501, cysteine 477–cysteine 497, and cysteine 486–cysteine 511. Asparagine 502, asparagine 505, and asparagine 519 each carry an N-linked (GlcNAc...) asparagine glycan. A helical membrane pass occupies residues 540–562 (LCVMCVCSMIGAMAQTPSVIILI). The Cytoplasmic portion of the chain corresponds to 563–571 (RTVSPELKS). The chain crosses the membrane as a helical span at residues 572–597 (YALGVLFLLLRLLGFIPPPLIFGAGI). Topologically, residues 598–630 (DSTCLFWSTFCGEQGACALYDNVAYRYLYVSIA) are extracellular. A helical membrane pass occupies residues 631-648 (IALKSFAFLLYTTTWQCL). The Cytoplasmic segment spans residues 649–705 (RKNYKRYIKNHEGGLSTSEFFASTLTLDNLGRDPVPANQTHRTKFIYNLEDHEWCEN).

The protein belongs to the organo anion transporter (TC 2.A.60) family.

Its subcellular location is the basolateral cell membrane. The protein localises to the apical cell membrane. It is found in the basal cell membrane. It catalyses the reaction L-thyroxine(out) = L-thyroxine(in). The catalysed reaction is prostaglandin E1(out) = prostaglandin E1(in). It carries out the reaction prostaglandin E2(out) = prostaglandin E2(in). The enzyme catalyses prostaglandin F2alpha(out) = prostaglandin F2alpha(in). It catalyses the reaction (5Z,8Z,11Z,14Z)-eicosatetraenoate(out) = (5Z,8Z,11Z,14Z)-eicosatetraenoate(in). The catalysed reaction is taurocholate(out) = taurocholate(in). It carries out the reaction glycocholate(out) = glycocholate(in). The enzyme catalyses estrone 3-sulfate(out) = estrone 3-sulfate(in). It catalyses the reaction argipressin(out) = argipressin(in). Functionally, putative organic anion antiporter with apparent broad substrate specificity. Recognizes various substrates including thyroid hormone L-thyroxine, prostanoids such as prostaglandin E1 and E2, bile acids such as taurocholate, glycolate and glycochenodeoxycholate and peptide hormones such as L-arginine vasopressin, likely operating in a tissue-specific manner. The transport mechanism, its electrogenicity and potential tissue-specific counterions remain to be elucidated. This is Solute carrier organic anion transporter family member 3A1 (SLCO3A1) from Bos taurus (Bovine).